Reading from the N-terminus, the 155-residue chain is Transcription antitermination protein NusB (155 aa).

This sequence belongs to the NusB family.

In terms of biological role, involved in transcription antitermination. Required for transcription of ribosomal RNA (rRNA) genes. Binds specifically to the boxA antiterminator sequence of the ribosomal RNA (rrn) operons. This chain is Transcription antitermination protein NusB, found in Ralstonia nicotianae (strain ATCC BAA-1114 / GMI1000) (Ralstonia solanacearum).